The chain runs to 122 residues: WUSCHEL-related homeobox 7 (122 aa).

The homeobox; WUS-type DNA-binding region spans 25–89 (AKCGRWNPTV…NHKARERQKC (65 aa)). Residues 98-111 (DHRQDTDLSKPRRD) are compositionally biased toward basic and acidic residues. A disordered region spans residues 98–122 (DHRQDTDLSKPRRDNVRRHQLPAKG). A compositionally biased stretch (basic residues) spans 112 to 122 (NVRRHQLPAKG).

It belongs to the WUS homeobox family.

It localises to the nucleus. Functionally, potential transcription factor that plays a central role during developmental processes. This chain is WUSCHEL-related homeobox 7 (WOX7), found in Arabidopsis thaliana (Mouse-ear cress).